A 446-amino-acid chain; its full sequence is Hercynine oxygenase (446 aa).

Residue histidine 51 coordinates Fe cation. 87–90 provides a ligand contact to gamma-L-glutamyl-L-cysteine; it reads RASR. Fe cation is bound by residues histidine 134 and histidine 138. Aspartate 416 and arginine 420 together coordinate gamma-L-glutamyl-L-cysteine.

It belongs to the EgtB family. Monomer. Fe(2+) is required as a cofactor.

The catalysed reaction is gamma-L-glutamyl-L-cysteine + hercynine + O2 = gamma-L-glutamyl-hercynylcysteine S-oxide + H2O. It participates in amino-acid biosynthesis; ergothioneine biosynthesis. Catalyzes the oxidative sulfurization of hercynine (N-alpha,N-alpha,N-alpha-trimethyl-L-histidine) into hercynyl-gamma-L-glutamyl-L-cysteine sulfoxide, a step in the biosynthesis pathway of ergothioneine. This chain is Hercynine oxygenase, found in Mycolicibacterium thermoresistibile (strain ATCC 19527 / DSM 44167 / CIP 105390 / JCM 6362 / NCTC 10409 / 316) (Mycobacterium thermoresistibile).